The primary structure comprises 642 residues: Probable serine/threonine-protein kinase drkA (642 aa).

An N-terminal signal peptide occupies residues 1–23 (MKKLPFLIIIIYIFLILISISSS). Residues 24–322 (IDYNYNNDID…KPTISLLKKY (299 aa)) lie on the Extracellular side of the membrane. The span at 106 to 128 (SENSGSGSNSNSNSKNTDSSTGP) shows a compositional bias: low complexity. The disordered stretch occupies residues 106–136 (SENSGSGSNSNSNSKNTDSSTGPTPSPISIN). 5 N-linked (GlcNAc...) asparagine glycosylation sites follow: N136, N140, N158, N244, and N271. The chain crosses the membrane as a helical span at residues 323–343 (LIIGFSIVGGLLIIGGCFLLI). At 344–642 (RNRYRSSGYY…SDLQYVRQQL (299 aa)) the chain is on the cytoplasmic side. The 254-residue stretch at 374–627 (IKIGVRIGKG…EQCLERLESI (254 aa)) folds into the Protein kinase domain. Residues 380-388 (IGKGNYGEV) and K401 contribute to the ATP site. D497 (proton acceptor) is an active-site residue.

The protein belongs to the protein kinase superfamily. TKL Ser/Thr protein kinase family.

The protein localises to the membrane. The catalysed reaction is L-seryl-[protein] + ATP = O-phospho-L-seryl-[protein] + ADP + H(+). It catalyses the reaction L-threonyl-[protein] + ATP = O-phospho-L-threonyl-[protein] + ADP + H(+). This chain is Probable serine/threonine-protein kinase drkA (drkA), found in Dictyostelium discoideum (Social amoeba).